Consider the following 431-residue polypeptide: Na(+)-translocating NADH-quinone reductase subunit F (431 aa).

A helical membrane pass occupies residues 10 to 30; that stretch reads IFVASAAFCSLGLILVAVILL. In terms of domain architecture, 2Fe-2S ferredoxin-type spans 41-133; the sequence is CKLKINNDDS…DLCLEVEERY (93 aa). C76, C82, C85, and C117 together coordinate [2Fe-2S] cluster. Residues 136–286 form the FAD-binding FR-type domain; it reads ASSWEGTVVS…SGPYGESFMK (151 aa). A catalytic region spans residues 289–413; sequence NRPVIFLIGG…ALHNSSILTL (125 aa).

This sequence belongs to the NqrF family. As to quaternary structure, composed of six subunits; NqrA, NqrB, NqrC, NqrD, NqrE and NqrF. [2Fe-2S] cluster is required as a cofactor. It depends on FAD as a cofactor.

The protein resides in the cell inner membrane. The catalysed reaction is a ubiquinone + n Na(+)(in) + NADH + H(+) = a ubiquinol + n Na(+)(out) + NAD(+). Its function is as follows. NQR complex catalyzes the reduction of ubiquinone-1 to ubiquinol by two successive reactions, coupled with the transport of Na(+) ions from the cytoplasm to the periplasm. The first step is catalyzed by NqrF, which accepts electrons from NADH and reduces ubiquinone-1 to ubisemiquinone by a one-electron transfer pathway. This is Na(+)-translocating NADH-quinone reductase subunit F from Chlamydia trachomatis serovar D (strain ATCC VR-885 / DSM 19411 / UW-3/Cx).